Reading from the N-terminus, the 533-residue chain is Beta-1,2-xylosyltransferase RCN11 (533 aa).

At 1–23 (MMPVRTYHHHHHHNNSNNHRLRR) the chain is on the cytoplasmic side. A helical; Signal-anchor for type II membrane protein transmembrane segment spans residues 24–44 (IIPRVLLAVFAIYAVSFAAYL). Residues 45–533 (LRHQSPHPHP…LSNILKGFGC (489 aa)) lie on the Lumenal side of the membrane. Residues 51 to 78 (HPHPHPAADPERDAVDAAGGGGGGGAVD) form a disordered region. Over residues 56-65 (PAADPERDAV) the composition is skewed to basic and acidic residues. N-linked (GlcNAc...) asparagine glycans are attached at residues N307 and N313.

The protein belongs to the glycosyltransferase 61 family. In terms of tissue distribution, expressed at the base of the crown roots and in the basal region of the shoot, which contains the shoot and axillary meristems.

Its subcellular location is the golgi apparatus membrane. It functions in the pathway glycan metabolism. Glycosyltransferase involved in the xylosylation of N-glycans. Possesses beta-1,2-xylosyltransferase activity, transferring xylose from UDP-xylose to the core beta-linked mannose of N-glycans. Beta-1,2-linked xylose residues on N-glycans are critical for seed germination and plant development and growth under conditions of abiotic stress. The polypeptide is Beta-1,2-xylosyltransferase RCN11 (Oryza sativa subsp. japonica (Rice)).